Reading from the N-terminus, the 258-residue chain is Caffeoyl-CoA O-methyltransferase 1 (258 aa).

Over residues 1 to 16 the composition is skewed to low complexity; sequence MATTATEAAPAQEQQA. The interval 1 to 31 is disordered; the sequence is MATTATEAAPAQEQQANGNGEQKTRHSEVGH. A compositionally biased stretch (basic and acidic residues) spans 22–31; that stretch reads QKTRHSEVGH. Lysine 32 serves as a coordination point for substrate. S-adenosyl-L-methionine-binding positions include threonine 74, glutamate 96, 98–99, serine 104, aspartate 122, and alanine 151; that span reads GV. Aspartate 174 contributes to the substrate binding site. Aspartate 174 contacts a divalent metal cation. Aspartate 176 is a binding site for S-adenosyl-L-methionine. A divalent metal cation is bound by residues aspartate 200 and asparagine 201. Asparagine 205 provides a ligand contact to substrate.

This sequence belongs to the class I-like SAM-binding methyltransferase superfamily. Cation-dependent O-methyltransferase family. CCoAMT subfamily. A divalent metal cation is required as a cofactor.

It carries out the reaction (E)-caffeoyl-CoA + S-adenosyl-L-methionine = (E)-feruloyl-CoA + S-adenosyl-L-homocysteine + H(+). The protein operates within aromatic compound metabolism; phenylpropanoid biosynthesis. Functionally, methylates caffeoyl-CoA to feruloyl-CoA and 5-hydroxyferuloyl-CoA to sinapoyl-CoA. Plays a role in the synthesis of feruloylated polysaccharides. Involved in the reinforcement of the plant cell wall. Also involved in the responding to wounding or pathogen challenge by the increased formation of cell wall-bound ferulic acid polymers. The chain is Caffeoyl-CoA O-methyltransferase 1 (CCOAOMT1) from Zea mays (Maize).